Consider the following 91-residue polypeptide: DNA-binding protein HU (91 aa).

Belongs to the bacterial histone-like protein family.

Functionally, histone-like DNA-binding protein which is capable of wrapping DNA to stabilize it, and thus to prevent its denaturation under extreme environmental conditions. This chain is DNA-binding protein HU (hup), found in Clostridium pasteurianum.